A 255-amino-acid polypeptide reads, in one-letter code: MRLIALPAFDDNYIWALVAADGRAIIVDPGQAAPVIATAEREGLVPSAILLTHHHGDHIDGVAELQQRWPGLELFSPADERIPTTAHHVSHGERLSLLAVDFQVIEVPGHTRTHIAFVTDRHLFSGDTLFSLGCGRMFEGTAPQMFDSLQRLACLPGETLVCCGHEYTLANAAFALHVDSTNAALQRRQQEAQAMRHAARPTLPISLKSELATNPFLRTNRPEIRAVVAARAAGALSSEVDVFAELRRWKDEFCL.

The Zn(2+) site is built by H53, H55, D57, H58, H110, D127, and H165.

Belongs to the metallo-beta-lactamase superfamily. Glyoxalase II family. As to quaternary structure, monomer. Zn(2+) serves as cofactor.

It carries out the reaction an S-(2-hydroxyacyl)glutathione + H2O = a 2-hydroxy carboxylate + glutathione + H(+). It participates in secondary metabolite metabolism; methylglyoxal degradation; (R)-lactate from methylglyoxal: step 2/2. In terms of biological role, thiolesterase that catalyzes the hydrolysis of S-D-lactoyl-glutathione to form glutathione and D-lactic acid. This is Hydroxyacylglutathione hydrolase from Xanthomonas oryzae pv. oryzae (strain MAFF 311018).